Consider the following 259-residue polypeptide: uncharacterized protein (259 aa).

The region spanning Q110–T259 is the N-acetyltransferase domain.

May be involved in maturation of the outermost layer of the spore. This is an uncharacterized protein from Bacillus subtilis (strain 168).